Here is a 448-residue protein sequence, read N- to C-terminus: N-succinylarginine dihydrolase (448 aa).

Substrate-binding positions include Ala19–Ser28, Asn110, and His137–Arg138. The active site involves Glu174. Arg216 serves as a coordination point for substrate. The active site involves His252. Residues Asp254 and Asn366 each contribute to the substrate site. Cys372 acts as the Nucleophile in catalysis.

Belongs to the succinylarginine dihydrolase family. As to quaternary structure, homodimer.

The catalysed reaction is N(2)-succinyl-L-arginine + 2 H2O + 2 H(+) = N(2)-succinyl-L-ornithine + 2 NH4(+) + CO2. The protein operates within amino-acid degradation; L-arginine degradation via AST pathway; L-glutamate and succinate from L-arginine: step 2/5. In terms of biological role, catalyzes the hydrolysis of N(2)-succinylarginine into N(2)-succinylornithine, ammonia and CO(2). In Legionella pneumophila (strain Corby), this protein is N-succinylarginine dihydrolase.